The primary structure comprises 1171 residues: DNA polymerase catalytic subunit (1171 aa).

Disordered regions lie at residues 647–687 (GTPA…PFRT), 704–735 (PGGGAVSSASVGGRAAVSPSETPAEREPEPAP), and 1149–1171 (VEEEVCESERGGSGLLSSLDSSR). Residues 649-662 (PARPPETPARPPET) show a composition bias toward pro residues. Low complexity-rich tracts occupy residues 663–674 (PAAGPSGAAHAG) and 709–725 (VSSASVGGRAAVSPSET). Basic and acidic residues predominate over residues 1149-1158 (VEEEVCESER).

This sequence belongs to the DNA polymerase type-B family.

The protein localises to the host nucleus. The enzyme catalyses DNA(n) + a 2'-deoxyribonucleoside 5'-triphosphate = DNA(n+1) + diphosphate. The chain is DNA polymerase catalytic subunit (DPOL) from Tupaia belangeri (Common tree shrew).